The primary structure comprises 257 residues: GTP cyclohydrolase FolE2 (257 aa).

Belongs to the GTP cyclohydrolase IV family.

The enzyme catalyses GTP + H2O = 7,8-dihydroneopterin 3'-triphosphate + formate + H(+). The protein operates within cofactor biosynthesis; 7,8-dihydroneopterin triphosphate biosynthesis; 7,8-dihydroneopterin triphosphate from GTP: step 1/1. Converts GTP to 7,8-dihydroneopterin triphosphate. This is GTP cyclohydrolase FolE2 from Dictyoglomus thermophilum (strain ATCC 35947 / DSM 3960 / H-6-12).